A 114-amino-acid polypeptide reads, in one-letter code: Astacin-like metalloprotease toxin 4 (114 aa).

A Peptidase M12A domain is found at 1-114; that stretch reads RETNENDYVD…GLLCLFKGSV (114 aa). An intrachain disulfide couples Cys-17 to Cys-38. Zn(2+) is bound at residue His-46. Glu-47 is an active-site residue. 2 residues coordinate Zn(2+): His-50 and His-56. N-linked (GlcNAc...) asparagine glycosylation is present at Asn-88.

In terms of assembly, monomer. It depends on Zn(2+) as a cofactor. As to expression, expressed by the venom gland.

The protein resides in the secreted. Its activity is regulated as follows. Inhibited by 1,10-phenanthroline. Zinc metalloprotease. Provoques deadhesion of endothelial cells from cell cultures, and also degradation of fibronectin, fibrinogen and gelatin in vitro. Its role in the venom is not fully understood but it might act as a spreading factor that facilitates diffusion of other venom toxins. Alternatively, it might be involved in the proteolytic processing of other venom toxins or it might play a role in extra-oral digestion of prey. This is Astacin-like metalloprotease toxin 4 from Loxosceles laeta (South American recluse spider).